The following is a 218-amino-acid chain: Cytochrome b6 (218 aa).

Residues 35–55 (IFYCLGGITLVCFLIQFATGF) form a helical membrane-spanning segment. Residue C38 participates in heme c binding. 2 residues coordinate heme b: H89 and H103. The next 3 helical transmembrane spans lie at 93 to 113 (ASMM…TGGF), 119 to 139 (LTWV…VTGY), and 189 to 209 (LHTF…FLMI). Residues H190 and H205 each coordinate heme b.

This sequence belongs to the cytochrome b family. PetB subfamily. In terms of assembly, the 4 large subunits of the cytochrome b6-f complex are cytochrome b6, subunit IV (17 kDa polypeptide, PetD), cytochrome f and the Rieske protein, while the 4 small subunits are PetG, PetL, PetM and PetN. The complex functions as a dimer. Requires heme b as cofactor. Heme c serves as cofactor.

The protein resides in the cellular thylakoid membrane. Its function is as follows. Component of the cytochrome b6-f complex, which mediates electron transfer between photosystem II (PSII) and photosystem I (PSI), cyclic electron flow around PSI, and state transitions. The sequence is that of Cytochrome b6 from Prochlorococcus marinus (strain MIT 9515).